Here is a 398-residue protein sequence, read N- to C-terminus: G2/mitotic-specific cyclin-B2 (398 aa).

Residue threonine 8 is modified to Phosphothreonine. A phosphoserine mark is found at serine 11, serine 77, and serine 92. The residue at position 94 (threonine 94) is a Phosphothreonine. Serine 99, serine 392, and serine 398 each carry phosphoserine.

The protein belongs to the cyclin family. Cyclin AB subfamily. Interacts with the CDK1 protein kinase to form a serine/threonine kinase holoenzyme complex also known as maturation promoting factor (MPF). The cyclin subunit imparts substrate specificity to the complex.

Its function is as follows. Essential for the control of the cell cycle at the G2/M (mitosis) transition. This Homo sapiens (Human) protein is G2/mitotic-specific cyclin-B2 (CCNB2).